We begin with the raw amino-acid sequence, 464 residues long: Glucan 1,3-beta-glucosidase 3 (464 aa).

This sequence belongs to the glycosyl hydrolase 5 (cellulase A) family.

The enzyme catalyses Successive hydrolysis of beta-D-glucose units from the non-reducing ends of (1-&gt;3)-beta-D-glucans, releasing alpha-glucose.. In Schizosaccharomyces pombe (strain 972 / ATCC 24843) (Fission yeast), this protein is Glucan 1,3-beta-glucosidase 3 (exg3).